The sequence spans 279 residues: Phosphatidylglycerol--prolipoprotein diacylglyceryl transferase (279 aa).

The next 7 membrane-spanning stretches (helical) occupy residues 14–34 (IAFS…ACAI), 62–82 (YFLW…ILIY), 106–126 (FVGI…IASY), 136–156 (LLIY…FGRI), 190–210 (PSQL…VMWA), 218–238 (GLLI…AEFY), and 252–272 (LSMG…ILLY). Residue Arg155 coordinates a 1,2-diacyl-sn-glycero-3-phospho-(1'-sn-glycerol).

The protein belongs to the Lgt family.

Its subcellular location is the cell inner membrane. The catalysed reaction is L-cysteinyl-[prolipoprotein] + a 1,2-diacyl-sn-glycero-3-phospho-(1'-sn-glycerol) = an S-1,2-diacyl-sn-glyceryl-L-cysteinyl-[prolipoprotein] + sn-glycerol 1-phosphate + H(+). It participates in protein modification; lipoprotein biosynthesis (diacylglyceryl transfer). Functionally, catalyzes the transfer of the diacylglyceryl group from phosphatidylglycerol to the sulfhydryl group of the N-terminal cysteine of a prolipoprotein, the first step in the formation of mature lipoproteins. This Helicobacter pylori (strain HPAG1) protein is Phosphatidylglycerol--prolipoprotein diacylglyceryl transferase.